Consider the following 695-residue polypeptide: Calcium-dependent serine proteinase (695 aa).

Positions methionine 1–alanine 21 are cleaved as a signal peptide. The CUB 1 domain occupies glutamate 22–isoleucine 136. Cystine bridges form between cysteine 71–cysteine 89, cysteine 141–cysteine 153, cysteine 149–cysteine 162, and cysteine 164–cysteine 177. Positions aspartate 137 to glycine 178 constitute an EGF-like; calcium-binding domain. Asparagine 155 is modified ((3R)-3-hydroxyasparagine). Asparagine 180 carries an N-linked (GlcNAc...) asparagine glycan. Disulfide bonds link cysteine 181/cysteine 208, cysteine 240/cysteine 257, cysteine 300/cysteine 347, cysteine 327/cysteine 360, cysteine 365/cysteine 410, and cysteine 392/cysteine 428. Residues cysteine 181–aspartate 296 enclose the CUB 2 domain. Sushi domains lie at isoleucine 298–proline 362 and valine 363–proline 430. An N-linked (GlcNAc...) asparagine glycan is attached at asparagine 413. A Peptidase S1 domain is found at isoleucine 445 to glutamine 687. Active-site charge relay system residues include histidine 482 and aspartate 536. 2 disulfides stabilise this stretch: cysteine 602–cysteine 625 and cysteine 634–cysteine 666. Serine 638 acts as the Charge relay system in catalysis.

It belongs to the peptidase S1 family. As to quaternary structure, heterodimer, consisting of heavy and light chains with disulfide bonds. The heavy chain is expected to be a regulatory subunit and the light chain contains the catalytic site. The iron and 2-oxoglutarate dependent 3-hydroxylation of aspartate and asparagine is (R) stereospecific within EGF domains.

The protein resides in the secreted. Its subcellular location is the extracellular space. It is found in the extracellular matrix. In terms of biological role, capable of degrading extracellular matrix proteins. CASP degrades type I and IV collagen and fibronectin in the presence of calcium. The chain is Calcium-dependent serine proteinase from Mesocricetus auratus (Golden hamster).